The following is a 240-amino-acid chain: uncharacterized protein (240 aa).

A compositionally biased stretch (polar residues) spans 197–210; sequence PLKSHSASRLNHLT. The disordered stretch occupies residues 197–222; sequence PLKSHSASRLNHLTPSPRPGETPLEN.

This is an uncharacterized protein from Caenorhabditis elegans.